The primary structure comprises 452 residues: UDP-N-acetylmuramoylalanine--D-glutamate ligase (452 aa).

Residue 119–125 participates in ATP binding; the sequence is GSNGKTT.

This sequence belongs to the MurCDEF family.

It is found in the cytoplasm. The enzyme catalyses UDP-N-acetyl-alpha-D-muramoyl-L-alanine + D-glutamate + ATP = UDP-N-acetyl-alpha-D-muramoyl-L-alanyl-D-glutamate + ADP + phosphate + H(+). It functions in the pathway cell wall biogenesis; peptidoglycan biosynthesis. Cell wall formation. Catalyzes the addition of glutamate to the nucleotide precursor UDP-N-acetylmuramoyl-L-alanine (UMA). The sequence is that of UDP-N-acetylmuramoylalanine--D-glutamate ligase from Streptococcus pyogenes serotype M6 (strain ATCC BAA-946 / MGAS10394).